Here is a 370-residue protein sequence, read N- to C-terminus: Aldo-keto reductase dtxS3 (370 aa).

NADP(+) is bound at residue Asp78. Residue Tyr83 is the Proton donor of the active site. His174 is a substrate binding site. NADP(+) contacts are provided by residues 204–205, Gln230, 259–269, and 333–341; these read SS, GPLASGRLARR, and GSVGRIEEA.

It belongs to the aldo/keto reductase family.

It participates in secondary metabolite biosynthesis. Its function is as follows. Aldo-keto reductase; part of the gene cluster that mediates the biosynthesis of destruxins, insecticidal cyclic hexadepsipeptides which induce flaccid paralysis and visceral muscle contraction in insects through targeting the calcium channels and vacuolar-type ATPases. The aldo-keto reductase dtxS3 converts alpha-ketoisocaproic acid from deaminated leucine into alpha-hydroxyisocaproic acid (HIC), which is the first substrate for destruxin assembly by dtxS1. L-aspartate decarboxylase dtxS4 converts aspartic acid into beta-alanine, the last substrate for the destruxin assembly line performed by dtxS1. The nonribosomal peptide synthetase dtxS1 synthesizes destruxins B and B2, whereas the cytochrome P450 monooxygenase dtxS2 is required to convert destruxin B into other destruxin derivatives, including destructins C, D, A and E. Destruxin E-diol (ED) is further produced in a non-enzymatic manner from destruxin E. Destruxins play an important role in virulence and escape from insect host immune defenses. This is Aldo-keto reductase dtxS3 from Metarhizium robertsii (strain ARSEF 23 / ATCC MYA-3075) (Metarhizium anisopliae (strain ARSEF 23)).